The chain runs to 217 residues: Magnetosome protein MamA (217 aa).

TPR repeat units follow at residues 12 to 44 (VTLY…NDDI), 46 to 79 (QVYY…DAFD), 80 to 113 (VEVA…APDN), 114 to 147 (IKVA…NPVN), 148 to 181 (FNVR…RPNE), and 182 to 215 (GKVH…DERS). Positions 41-112 (NDDIRQVYYR…LERSIADAPD (72 aa)) are N-terminal domain. Residues 113-217 (NIKVATVLGL…ANELDERSAV (105 aa)) are C-terminal domain.

Belongs to the magnetosome MamA family. In terms of assembly, forms round, 20 nm diameter complexes with a central cavity. Probably binds MamC. Interacts with full-length Mms6.

The protein localises to the magnetosome membrane. In terms of biological role, probably forms a large homooligomer on which other magnetosome subunits assemble. Required for formation of functional magnetosomes from pre-existing vesicles. This is Magnetosome protein MamA from Magnetospirillum gryphiswaldense (strain DSM 6361 / JCM 21280 / NBRC 15271 / MSR-1).